We begin with the raw amino-acid sequence, 108 residues long: Iron-sulfur cluster assembly protein CyaY (108 aa).

This sequence belongs to the frataxin family.

Involved in iron-sulfur (Fe-S) cluster assembly. May act as a regulator of Fe-S biogenesis. The protein is Iron-sulfur cluster assembly protein CyaY of Burkholderia ambifaria (strain MC40-6).